The chain runs to 448 residues: Phosphoglucosamine mutase (448 aa).

Residue serine 100 is the Phosphoserine intermediate of the active site. Positions 100, 240, 242, and 244 each coordinate Mg(2+). Serine 100 carries the post-translational modification Phosphoserine.

This sequence belongs to the phosphohexose mutase family. The cofactor is Mg(2+). Activated by phosphorylation.

The catalysed reaction is alpha-D-glucosamine 1-phosphate = D-glucosamine 6-phosphate. Catalyzes the conversion of glucosamine-6-phosphate to glucosamine-1-phosphate. This chain is Phosphoglucosamine mutase, found in Bacillus anthracis (strain A0248).